Reading from the N-terminus, the 115-residue chain is U3-lycotoxin-Ls1o (115 aa).

The first 20 residues, 1 to 20 (MKFVLLFGVLLVTLFSYSSA), serve as a signal peptide directing secretion. The propeptide occupies 21 to 44 (EMLDDFDQADEDELLSLIEKEEAR). 4 disulfides stabilise this stretch: cysteine 48/cysteine 63, cysteine 55/cysteine 72, cysteine 62/cysteine 87, and cysteine 74/cysteine 85.

It belongs to the neurotoxin 19 (CSTX) family. 01 subfamily. As to expression, expressed by the venom gland.

It localises to the secreted. In Lycosa singoriensis (Wolf spider), this protein is U3-lycotoxin-Ls1o.